The sequence spans 1257 residues: MELAAWCRWGFLLALLPPGIAGTQVCTGTDMKLRLPASPETHLDMLRHLYQGCQVVQGNLELTYVPANASLSFLQDIQEVQGYMLIAHNQVKRVPLQRLRIVRGTQLFEDKYALAVLDNRDPQDNVAASTPGRTPEGLRELQLRSLTEILKGGVLIRGNPQLCYQDMVLWKDVFRKNNQLAPVDIDTNRSRACPPCAPACKDNHCWGESPEDCQILTGTICTSGCARCKGRLPTDCCHEQCAAGCTGPKHSDCLACLHFNHSGICELHCPALVTYNTDTFESMHNPEGRYTFGASCVTTCPYNYLSTEVGSCTLVCPPNNQEVTAEDGTQRCEKCSKPCARVCYGLGMEHLRGARAITSDNVQEFDGCKKIFGSLAFLPESFDGDPSSGIAPLRPEQLQVFETLEEITGYLYISAWPDSLRDLSVFQNLRIIRGRILHDGAYSLTLQGLGIHSLGLRSLRELGSGLALIHRNAHLCFVHTVPWDQLFRNPHQALLHSGNRPEEDLCVSSGLVCNSLCAHGHCWGPGPTQCVNCSHFLRGQECVEECRVWKGLPREYVSDKRCLPCHPECQPQNSSETCFGSEADQCAACAHYKDSSSCVARCPSGVKPDLSYMPIWKYPDEEGICQPCPINCTHSCVDLDERGCPAEQRASPVTFIIATVVGVLLFLILVVVVGILIKRRRQKIRKYTMRRLLQETELVEPLTPSGAMPNQAQMRILKETELRKVKVLGSGAFGTVYKGIWIPDGENVKIPVAIKVLRENTSPKANKEILDEAYVMAGVGSPYVSRLLGICLTSTVQLVTQLMPYGCLLDHVREHRGRLGSQDLLNWCVQIAKGMSYLEDVRLVHRDLAARNVLVKSPNHVKITDFGLARLLDIDETEYHADGGKVPIKWMALESILRRRFTHQSDVWSYGVTVWELMTFGAKPYDGIPAREIPDLLEKGERLPQPPICTIDVYMIMVKCWMIDSECRPRFRELVSEFSRMARDPQRFVVIQNEDLGPSSPMDSTFYRSLLEDDDMGDLVDAEEYLVPQQGFFSPDPTPGTGSTAHRRHRSSSTRSGGGELTLGLEPSEEGPPRSPLAPSEGAGSDVFDGDLAMGVTKGLQSLSPHDLSPLQRYSEDPTLPLPPETDGYVAPLACSPQPEYVNQSEVQPQPPLTPEGPLPPVRPAGATLERPKTLSPGKNGVVKDVFAFGGAVENPEYLVPREGTASPPHPSPAFSPAFDNLYYWDQNSSEQGPPPSNFEGTPTAENPEYLGLDVPV.

A signal peptide spans 1–22; it reads MELAAWCRWGFLLALLPPGIAG. The Extracellular portion of the chain corresponds to 23–654; the sequence is TQVCTGTDMK…PAEQRASPVT (632 aa). Cysteine 26 and cysteine 53 form a disulfide bridge. 2 N-linked (GlcNAc...) asparagine glycosylation sites follow: asparagine 68 and asparagine 188. Cystine bridges form between cysteine 163/cysteine 193, cysteine 196/cysteine 205, cysteine 200/cysteine 213, cysteine 221/cysteine 228, cysteine 225/cysteine 236, cysteine 237/cysteine 245, cysteine 241/cysteine 253, cysteine 256/cysteine 265, cysteine 269/cysteine 296, cysteine 300/cysteine 312, cysteine 316/cysteine 332, cysteine 335/cysteine 339, cysteine 343/cysteine 368, cysteine 476/cysteine 506, cysteine 513/cysteine 522, and cysteine 517/cysteine 530. Asparagine 260 carries an N-linked (GlcNAc...) asparagine glycan. N-linked (GlcNAc...) asparagine glycosylation is present at asparagine 532. Disulfide bonds link cysteine 533/cysteine 542, cysteine 546/cysteine 562, cysteine 565/cysteine 578, cysteine 569/cysteine 586, cysteine 589/cysteine 598, cysteine 602/cysteine 625, cysteine 628/cysteine 636, and cysteine 632/cysteine 644. Residue asparagine 573 is glycosylated (N-linked (GlcNAc...) asparagine). An N-linked (GlcNAc...) asparagine glycan is attached at asparagine 631. A helical membrane pass occupies residues 655–677; the sequence is FIIATVVGVLLFLILVVVVGILI. Residues 678–691 are required for interaction with KPNB1 and EEA1; the sequence is KRRRQKIRKYTMRR. The Nuclear localization signal signature appears at 678-691; that stretch reads KRRRQKIRKYTMRR. Topologically, residues 678-1257 are cytoplasmic; sequence KRRRQKIRKY…PEYLGLDVPV (580 aa). A Protein kinase domain is found at 722 to 989; it reads LRKVKVLGSG…RMARDPQRFV (268 aa). ATP is bound by residues 728–736 and lysine 755; that span reads LGSGAFGTV. Catalysis depends on aspartate 847, which acts as the Proton acceptor. Tyrosine 879 carries the phosphotyrosine modification. Residues 1029 to 1181 form a disordered region; that stretch reads QQGFFSPDPT…PKTLSPGKNG (153 aa). Serine 1056, serine 1080, serine 1085, and serine 1109 each carry phosphoserine. A Phosphotyrosine modification is found at tyrosine 1114. Residue tyrosine 1141 is modified to Phosphotyrosine; by autocatalysis. The segment covering 1149–1163 has biased composition (pro residues); it reads PQPPLTPEGPLPPVR. Threonine 1168 bears the Phosphothreonine mark. The interaction with PIK3C2B stretch occupies residues 1197–1199; sequence EYL. The residue at position 1198 (tyrosine 1198) is a Phosphotyrosine. The disordered stretch occupies residues 1200-1257; that stretch reads VPREGTASPPHPSPAFSPAFDNLYYWDQNSSEQGPPPSNFEGTPTAENPEYLGLDVPV. Position 1250 is a phosphotyrosine; by autocatalysis (tyrosine 1250).

The protein belongs to the protein kinase superfamily. Tyr protein kinase family. EGF receptor subfamily. As to quaternary structure, homodimer. Heterodimer with EGFR, ERBB3 and ERBB4. Part of a complex with EGFR and either PIK3C2A or PIK3C2B. May interact with PIK3C2B when phosphorylated on Tyr-1198. Interacts with PRKCABP and PLXNB1. Interacts (when phosphorylated on Tyr-1250) with MEMO1. Interacts with MUC1. Interacts (when phosphorylated on Tyr-1141) with GRB7 (via SH2 domain). Interacts (when phosphorylated on Tyr-1250) with ERBIN Interacts with SRC, KPNB1, RANBP2, EEA1, CRM1, CLTC, PTK6, RPA194, MYOC and ACTB. Interacts with HSP90AA1 and HSP90AB1; the interaction suppresses ERBB2 kinase activity. Interacts with SORL1; this interaction regulates ERBB2 subcellular distribution by promoting its recycling after internalization from endosomes back to the plasma membrane, hence stimulates ERBB2-mediated signaling. Interacts with SH3BGRL. Interacts with ROR1. Post-translationally, autophosphorylated. Autophosphorylation occurs in trans, i.e. one subunit of the dimeric receptor phosphorylates tyrosine residues on the other subunit. Ligand-binding increases phosphorylation on tyrosine residues. Signaling via SEMA4C promotes phosphorylation at Tyr-1250. Dephosphorylated by PTPN12.

It localises to the cell membrane. It is found in the cell projection. The protein resides in the ruffle membrane. The protein localises to the early endosome. Its subcellular location is the cytoplasm. It localises to the perinuclear region. It is found in the nucleus. It catalyses the reaction L-tyrosyl-[protein] + ATP = O-phospho-L-tyrosyl-[protein] + ADP + H(+). Its function is as follows. Protein tyrosine kinase that is part of several cell surface receptor complexes, but that apparently needs a coreceptor for ligand binding. Essential component of a neuregulin-receptor complex, although neuregulins do not interact with it alone. GP30 is a potential ligand for this receptor. Regulates outgrowth and stabilization of peripheral microtubules (MTs). Upon ERBB2 activation, the MEMO1-RHOA-DIAPH1 signaling pathway elicits the phosphorylation and thus the inhibition of GSK3B at cell membrane. This prevents the phosphorylation of APC and CLASP2, allowing its association with the cell membrane. In turn, membrane-bound APC allows the localization of MACF1 to the cell membrane, which is required for microtubule capture and stabilization. Interacts (preferentially with the tyrosine phosphorylated form) with CPNE3; this interaction occurs at the cell membrane and is increased in a growth factor heregulin-dependent manner. In the nucleus is involved in transcriptional regulation. Associates with the 5'-TCAAATTC-3' sequence in the PTGS2/COX-2 promoter and activates its transcription. Implicated in transcriptional activation of CDKN1A; the function involves STAT3 and SRC. Involved in the transcription of rRNA genes by RNA Pol I and enhances protein synthesis and cell growth. In Rattus norvegicus (Rat), this protein is Receptor tyrosine-protein kinase erbB-2 (Erbb2).